The chain runs to 94 residues: Cell division protein FtsB (94 aa).

At M1–V3 the chain is on the cytoplasmic side. A helical transmembrane segment spans residues F4–W21. The Periplasmic portion of the chain corresponds to G22 to Q94. Residues Q33–G76 adopt a coiled-coil conformation.

The protein belongs to the FtsB family. Part of a complex composed of FtsB, FtsL and FtsQ.

It localises to the cell inner membrane. Functionally, essential cell division protein. May link together the upstream cell division proteins, which are predominantly cytoplasmic, with the downstream cell division proteins, which are predominantly periplasmic. In Vibrio cholerae serotype O1 (strain ATCC 39315 / El Tor Inaba N16961), this protein is Cell division protein FtsB.